A 691-amino-acid chain; its full sequence is Elongation factor G (691 aa).

A tr-type G domain is found at 8 to 283; it reads EDYRNFGIMA…AVVDYLPSPI (276 aa). GTP is bound by residues 17 to 24, 81 to 85, and 135 to 138; these read AHIDAGKT, DTPGH, and NKMD.

The protein belongs to the TRAFAC class translation factor GTPase superfamily. Classic translation factor GTPase family. EF-G/EF-2 subfamily.

It localises to the cytoplasm. Its function is as follows. Catalyzes the GTP-dependent ribosomal translocation step during translation elongation. During this step, the ribosome changes from the pre-translocational (PRE) to the post-translocational (POST) state as the newly formed A-site-bound peptidyl-tRNA and P-site-bound deacylated tRNA move to the P and E sites, respectively. Catalyzes the coordinated movement of the two tRNA molecules, the mRNA and conformational changes in the ribosome. This Methylocella silvestris (strain DSM 15510 / CIP 108128 / LMG 27833 / NCIMB 13906 / BL2) protein is Elongation factor G.